The chain runs to 514 residues: Arabinose import ATP-binding protein AraG (514 aa).

2 consecutive ABC transporter domains span residues 16 to 251 and 251 to 507; these read LRFN…MVGR and RDIQ…LPRH. Position 48–55 (48–55) interacts with ATP; the sequence is GENGAGKS.

Belongs to the ABC transporter superfamily. Arabinose importer (TC 3.A.1.2.2) family. In terms of assembly, the complex is composed of two ATP-binding proteins (AraG), two transmembrane proteins (AraH) and a solute-binding protein (AraF).

Its subcellular location is the cell inner membrane. The catalysed reaction is L-arabinose(out) + ATP + H2O = L-arabinose(in) + ADP + phosphate + H(+). Part of the ABC transporter complex AraFGH involved in arabinose import. Responsible for energy coupling to the transport system. This chain is Arabinose import ATP-binding protein AraG, found in Pseudomonas fluorescens (strain Pf0-1).